A 441-amino-acid chain; its full sequence is Arginine biosynthesis bifunctional protein ArgJ, mitochondrial (441 aa).

Thr178, Lys204, Thr215, Glu304, Asn436, and Ser441 together coordinate substrate. The active-site Nucleophile is the Thr215.

This sequence belongs to the ArgJ family. Heterodimer of an alpha and a beta chain. The alpha and beta chains are autoproteolytically processed from a single precursor protein within the mitochondrion.

The protein localises to the mitochondrion matrix. The catalysed reaction is N(2)-acetyl-L-ornithine + L-glutamate = N-acetyl-L-glutamate + L-ornithine. The enzyme catalyses L-glutamate + acetyl-CoA = N-acetyl-L-glutamate + CoA + H(+). Its pathway is amino-acid biosynthesis; L-arginine biosynthesis; L-ornithine and N-acetyl-L-glutamate from L-glutamate and N(2)-acetyl-L-ornithine (cyclic): step 1/1. It functions in the pathway amino-acid biosynthesis; L-arginine biosynthesis; N(2)-acetyl-L-ornithine from L-glutamate: step 1/4. In terms of biological role, catalyzes two activities which are involved in the cyclic version of arginine biosynthesis: the synthesis of acetylglutamate from glutamate and acetyl-CoA, and of ornithine by transacetylation between acetylornithine and glutamate. This is Arginine biosynthesis bifunctional protein ArgJ, mitochondrial from Lodderomyces elongisporus (strain ATCC 11503 / CBS 2605 / JCM 1781 / NBRC 1676 / NRRL YB-4239) (Yeast).